The sequence spans 178 residues: Probable chorismate pyruvate-lyase (178 aa).

4 residues coordinate substrate: methionine 37, arginine 78, leucine 114, and glutamate 165.

It belongs to the UbiC family.

Its subcellular location is the cytoplasm. It carries out the reaction chorismate = 4-hydroxybenzoate + pyruvate. The protein operates within cofactor biosynthesis; ubiquinone biosynthesis. In terms of biological role, removes the pyruvyl group from chorismate, with concomitant aromatization of the ring, to provide 4-hydroxybenzoate (4HB) for the ubiquinone pathway. The polypeptide is Probable chorismate pyruvate-lyase (Aeromonas hydrophila subsp. hydrophila (strain ATCC 7966 / DSM 30187 / BCRC 13018 / CCUG 14551 / JCM 1027 / KCTC 2358 / NCIMB 9240 / NCTC 8049)).